Consider the following 467-residue polypeptide: Mothers against decapentaplegic homolog 2 (467 aa).

Ser-2 carries the N-acetylserine modification. Thr-8 carries the post-translational modification Phosphothreonine; by MAPK3. In terms of domain architecture, MH1 spans 10-176 (PVVKRLLGWK…YQRVETPVLP (167 aa)). The residue at position 19 (Lys-19) is an N6-acetyllysine. Cys-74, Cys-149, Cys-161, and His-166 together coordinate Zn(2+). Positions 207–217 (PAGIEPQSNYI) are enriched in polar residues. Positions 207 to 251 (PAGIEPQSNYIPETPPPGYISEDGETSDQQLNQSMDTGSPAELSP) are disordered. Thr-220 bears the Phosphothreonine mark. The short motif at 221–225 (PPPGY) is the PY-motif element. The span at 233-243 (SDQQLNQSMDT) shows a compositional bias: polar residues. Ser-240 carries the phosphoserine; by CAMK2 modification. Ser-245, Ser-250, Ser-255, Ser-458, Ser-460, and Ser-464 each carry phosphoserine. Residues 274 to 467 (WCSIAYYELN…SPSVRCSSMS (194 aa)) enclose the MH2 domain. A phosphoserine; by TGFBR1 mark is found at Ser-465 and Ser-467.

Belongs to the dwarfin/SMAD family. In terms of assembly, monomer; in the absence of TGF-beta. Heterodimer; in the presence of TGF-beta. Forms a heterodimer with co-SMAD, SMAD4, in the nucleus to form the transactivation complex SMAD2/SMAD4. Found in a complex with SMAD3 and TRIM33 upon addition of TGF-beta. Identified in a complex that contains at least ZNF451, SMAD2, SMAD3 and SMAD4. Interacts (via the MH2 domain) with ZFYVE9; may form trimers with the SMAD4 co-SMAD. Interacts with TAZ/WWRT1. Interacts with FOXH1. Interacts with SNW1. Interacts with CREB-binding protein (CBP) and EP300. Interacts with SNON. Interacts with ALK4/ACVR1B. Interacts with SKOR1. Interacts with SKOR2. Interacts with PRDM16. Interacts (via MH2 domain) with LEMD3. Interacts with RBPMS. Interacts with WWP1. Interacts (dephosphorylated form, via the MH1 and MH2 domains) with RANBP3 (via its C-terminal R domain); the interaction results in the export of dephosphorylated SMAD3 out of the nucleus and termination of the TGF-beta signaling. Interacts with PDPK1 (via PH domain). Interacts with DAB2; the interactions are enhanced upon TGF-beta stimulation. Interacts with USP15. Interacts with PPP5C. Interacts with LDLRAD4 (via the SMAD interaction motif). Interacts (via MH2 domain) with PMEPA1 (via the SMAD interaction motif). Interacts with ZFHX3. Interacts with ZNF451. Interacts with SMURF2 when phosphorylated on Ser-465/467. Interacts with PPM1A. Interacts with TGF-beta. Interacts with TGFBR1. Interacts with TGIF. Interacts with SMAD3 and TRIM33. Interacts with ZNF580. Interacts with NEDD4L in response to TGF-beta. Interacts with HGS. Interacts with AIP1. Interacts with WWP1. Interacts with PML. Interacts weakly with ZNF8. Interacts (when phosphorylated) with RNF111; RNF111 acts as an enhancer of the transcriptional responses by mediating ubiquitination and degradation of SMAD2 inhibitors. Interacts with YAP1 (when phosphorylated at 'Ser-127'). Interacts when phosphorylated with IPO7; the interaction facilitates translocation of SMAD2 to the nucleus. Interacts with MTMR4; negatively regulates TGF-beta signaling through SMAD2 dephosphorylation and retention in endosomes. Post-translationally, phosphorylated on one or several of Thr-220, Ser-245, Ser-250, and Ser-255. In response to TGF-beta, phosphorylated on Ser-465/467 by TGF-beta and activin type 1 receptor kinases. TGF-beta-induced Ser-465/467 phosphorylation declines progressively in a KMT5A-dependent manner. Able to interact with SMURF2 when phosphorylated on Ser-465/467, recruiting other proteins, such as SNON, for degradation. In response to decorin, the naturally occurring inhibitor of TGF-beta signaling, phosphorylated on Ser-240 by CaMK2. Phosphorylated by MAPK3 upon EGF stimulation; which increases transcriptional activity and stability, and is blocked by calmodulin. Phosphorylated by PDPK1. In terms of processing, in response to TGF-beta, ubiquitinated by NEDD4L; which promotes its degradation. Monoubiquitinated, leading to prevent DNA-binding. Deubiquitination by USP15 alleviates inhibition and promotes activation of TGF-beta target genes. Ubiquitinated by RNF111, leading to its degradation: only SMAD2 proteins that are 'in use' are targeted by RNF111, RNF111 playing a key role in activating SMAD2 and regulating its turnover. Acetylated on Lys-19 by coactivators in response to TGF-beta signaling, which increases transcriptional activity. Isoform short: Acetylation increases DNA binding activity in vitro and enhances its association with target promoters in vivo. Acetylation in the nucleus by EP300 is enhanced by TGF-beta. Expressed at high levels in skeletal muscle, endothelial cells, heart and placenta.

The protein localises to the cytoplasm. It localises to the nucleus. Receptor-regulated SMAD (R-SMAD) that is an intracellular signal transducer and transcriptional modulator activated by TGF-beta (transforming growth factor) and activin type 1 receptor kinases. Binds the TRE element in the promoter region of many genes that are regulated by TGF-beta and, on formation of the SMAD2/SMAD4 complex, activates transcription. Promotes TGFB1-mediated transcription of odontoblastic differentiation genes in dental papilla cells. Positively regulates PDPK1 kinase activity by stimulating its dissociation from the 14-3-3 protein YWHAQ which acts as a negative regulator. May act as a tumor suppressor in colorectal carcinoma. In Homo sapiens (Human), this protein is Mothers against decapentaplegic homolog 2 (SMAD2).